The sequence spans 291 residues: MSKVPGPIVLMEPLSGKTSLIIKINAIHVSKRSKYQGILIVDTDDYGRTLVLDDYIQSSYYDEIYYHESLVHPAVTTHPRPSDVLILGGGEGATLREVLKHNTVKRAVMVDIDGDVVELSKKYLPQMHQGAFDDPRSEVRIEDGFVYVENALKRGEKFDVVIMDLTDPYSSDIAKQLYTPEFFGKVKRLLREDGIVVTQAGNSFYFPEAYDYVLQGVKGNFPIIAEYSVWIPSFGYAVNFVLGSLKHDPHSLSAEEVDKRLSERGVRAEFYSGKTHIALMNMPVIKKILRV.

The 241-residue stretch at Pro-5–Leu-245 folds into the PABS domain. Gln-36 contributes to the S-methyl-5'-thioadenosine binding site. Residues His-67 and Glu-91 each coordinate spermidine. Residues Asp-111 and Asp-143–Gly-144 contribute to the S-methyl-5'-thioadenosine site. The Proton acceptor role is filled by Asp-164.

The protein belongs to the spermidine/spermine synthase family. As to quaternary structure, homodimer or homotetramer.

The protein resides in the cytoplasm. It carries out the reaction norspermidine + S-adenosyl 3-(methylsulfanyl)propylamine = norspermine + S-methyl-5'-thioadenosine + H(+). The enzyme catalyses S-adenosyl 3-(methylsulfanyl)propylamine + spermidine = thermospermine + S-methyl-5'-thioadenosine + H(+). Its function is as follows. Involved in the biosynthesis of polyamines which are thought to support the growth of thermophilic microorganisms under high-temperature conditions. It seems that long-chain and branched-chain of polyamines effectively stabilize DNA and RNA, respectively. Catalyzes the irreversible transfer of a propylamine group from the amino donor S-adenosylmethioninamine (decarboxy-AdoMet) to norspermidine and 1,3-diaminopropane to yield norspermine, and to spermidine to yield thermospermine. It can also synthesize thermospermine from putrescine (1,4-diaminobutane) and caldopentamine from norspermine with a very low activity. The biosynthesis of caldohexamine and caldoheptamine from caldopentamine has been also observed. The chain is Polyamine aminopropyltransferase from Pyrobaculum aerophilum (strain ATCC 51768 / DSM 7523 / JCM 9630 / CIP 104966 / NBRC 100827 / IM2).